We begin with the raw amino-acid sequence, 545 residues long: Probable quinate permease (545 aa).

Residues Met-1–Tyr-22 are Cytoplasmic-facing. Residues Leu-23–Gly-43 traverse the membrane as a helical segment. Over Thr-44–Asn-66 the chain is Extracellular. A helical transmembrane segment spans residues Leu-67 to Ala-87. Topologically, residues Tyr-88–Arg-97 are cytoplasmic. The helical transmembrane segment at Trp-98–Asn-118 threads the bilayer. Residues Gly-119–Arg-130 are Extracellular-facing. The chain crosses the membrane as a helical span at residues Val-131–Leu-151. The Cytoplasmic segment spans residues Ala-152–Arg-159. The chain crosses the membrane as a helical span at residues Leu-160–Phe-180. The Extracellular portion of the chain corresponds to Gly-181–Trp-193. A helical membrane pass occupies residues Ile-194 to Val-214. Topologically, residues Arg-215–Arg-285 are cytoplasmic. Residues Leu-286–Tyr-306 form a helical membrane-spanning segment. Topologically, residues Tyr-307–Leu-325 are extracellular. Residues Thr-326–Ile-346 traverse the membrane as a helical segment. Over Asp-347 to Arg-352 the chain is Cytoplasmic. Residues Leu-353 to Ile-373 form a helical membrane-spanning segment. The Extracellular portion of the chain corresponds to Lys-374–Asp-384. The chain crosses the membrane as a helical span at residues Ala-385–Tyr-405. Residues Thr-406–Tyr-457 are Cytoplasmic-facing. The chain crosses the membrane as a helical span at residues Gly-458–Ile-478. At Pro-479–Ala-545 the chain is on the extracellular side. A disordered region spans residues Ile-520–Ala-545.

Belongs to the major facilitator superfamily. Sugar transporter (TC 2.A.1.1) family. In terms of assembly, interacts with creB. Ubiquitinated. Deubiquitinated by creB, probably to control its activity or amount.

It is found in the cell membrane. Functionally, integral membrane transporter that imports quinic acid to be catabolized as a carbon source. In Aspergillus terreus (strain NIH 2624 / FGSC A1156), this protein is Probable quinate permease (qutD).